Reading from the N-terminus, the 469-residue chain is Uronate isomerase (469 aa).

The protein belongs to the metallo-dependent hydrolases superfamily. Uronate isomerase family.

It catalyses the reaction D-glucuronate = D-fructuronate. The catalysed reaction is aldehydo-D-galacturonate = keto-D-tagaturonate. It participates in carbohydrate metabolism; pentose and glucuronate interconversion. This is Uronate isomerase from Corynebacterium efficiens (strain DSM 44549 / YS-314 / AJ 12310 / JCM 11189 / NBRC 100395).